The primary structure comprises 252 residues: Oil body-associated protein 2A (252 aa).

The tract at residues 1 to 31 (MASSDGKPLPTPASVGGGGGSSTAPPGQPTT) is disordered. A compositionally biased stretch (low complexity) spans 22–31 (STAPPGQPTT).

This sequence belongs to the OBAP family.

The sequence is that of Oil body-associated protein 2A from Zea mays (Maize).